A 545-amino-acid chain; its full sequence is Autoimmune regulator (545 aa).

Residues 1–105 form the HSR domain; sequence MATDAALRRL…ILDSFPKDVD (105 aa). 2 short sequence motifs (LXXLL motif) span residues 7-11 and 63-67; these read LRRLL and LSWLL. Disordered regions lie at residues 101–178 and 234–290; these read PKDV…LPLG and SKFE…SDPQ. A compositionally biased stretch (pro residues) spans 116–128; that stretch reads PAVPKALVPPPRL. Over residues 140 to 152 the composition is skewed to low complexity; it reads AAAPAALTPRGTA. The region spanning 181-280 is the SAND domain; it reads IQTMSASVQR…ARLGQQGSVP (100 aa). Interaction with histone H3 not methylated at 'Lys-4' stretches follow at residues 295–298, 304–312, and 331–335; these read NEDE, DGGELICCD, and PSGTW. Residues 296-343 form a PHD-type 1 zinc finger; the sequence is EDECAVCRDGGELICCDGCPRAFHLACLSPPLREIPSGTWRCSSCLQA. Residues 348-382 are disordered; the sequence is VQPRAEEPRPQEPPVETPLPPGLRSAGEEVRGPPG. The span at 358-368 shows a compositional bias: pro residues; the sequence is QEPPVETPLPP. Residues 414 to 418 carry the LXXLL motif 3 motif; it reads LHPLL. The PHD-type 2 zinc-finger motif lies at 434–475; it reads CGVCGDGTDVLRCTHCAAAFHWRCHFPAGTSRPGTGLRCRSC. Residues 489–508 form a disordered region; it reads APSPARLAPGPAKDDTASHE. The short motif at 516–520 is the LXXLL motif 4 element; sequence LESLL.

As to quaternary structure, homodimer and homotetramer. Interacts with CREBBP. Interacts preferentially with histone H3 that is not methylated at 'Lys-4'. Binds with lower affinity to histone H3 that is monomethylated at 'Lys-4'. Trimethylation of histone H3 at 'Lys-4' or phosphorylation at 'Thr-3' abolish the interaction. Binds with lower affinity to histone H3 that is acetylated at 'Lys-4', or that is acetylated at 'Lys-9' or trimethylated at 'Lys-9'. Binds histone H3 that is dimethylated at 'Arg-2' with very low affinity. Phosphorylated. Phosphorylation could trigger oligomerization. As to expression, widely expressed. Expressed at higher level in thymus (medullary epithelial cells and monocyte-dendritic cells), pancreas, adrenal cortex and testis. Expressed at lower level in the spleen, fetal liver and lymph nodes. In secondary lymphoid organs, expressed in a discrete population of bone marrow-derived toleregenic antigen presenting cells (APCs) called extrathymic AIRE expressing cells (eTAC)(at protein level). Isoform 2 and isoform 3 seem to be less frequently expressed than isoform 1, if at all.

Its subcellular location is the nucleus. The protein localises to the cytoplasm. Transcription factor playing an essential role to promote self-tolerance in the thymus by regulating the expression of a wide array of self-antigens that have the commonality of being tissue-restricted in their expression pattern in the periphery, called tissue restricted antigens (TRA). Binds to G-doublets in an A/T-rich environment; the preferred motif is a tandem repeat of 5'-ATTGGTTA-3' combined with a 5'-TTATTA-3' box. Binds to nucleosomes. Binds to chromatin and interacts selectively with histone H3 that is not methylated at 'Lys-4', not phosphorylated at 'Thr-3' and not methylated at 'Arg-2'. Functions as a sensor of histone H3 modifications that are important for the epigenetic regulation of gene expression. Mainly expressed by medullary thymic epithelial cells (mTECs), induces the expression of thousands of tissue-restricted proteins, which are presented on major histocompatibility complex class I (MHC-I) and MHC-II molecules to developing T-cells percolating through the thymic medulla. Also induces self-tolerance through other mechanisms such as the regulation of the mTEC differentiation program. Controls the medullary accumulation of thymic dendritic cells and the development of regulatory T-cell through the regulation of XCL1 expression. Regulates the production of CCR4 and CCR7 ligands in medullary thymic epithelial cells and alters the coordinated maturation and migration of thymocytes. In thimic B-cells, allows the presentation of licensing-dependent endogenous self-anitgen for negative selection. In secondary lymphoid organs, induces functional inactivation of CD4(+) T-cells. Expressed by a distinct bone marrow-derived population, induces self-tolerance through a mechanism that does not require regulatory T-cells and is resitant to innate inflammatory stimuli. The chain is Autoimmune regulator (AIRE) from Homo sapiens (Human).